The sequence spans 555 residues: Protein NRT1/ PTR FAMILY 2.1 (555 aa).

The next 12 membrane-spanning stretches (helical) occupy residues threonine 32–isoleucine 52, isoleucine 68–phenylalanine 88, isoleucine 91–isoleucine 111, isoleucine 127–valine 147, phenylalanine 175–valine 195, leucine 205–lysine 225, valine 324–methionine 344, valine 369–isoleucine 389, leucine 401–valine 421, valine 437–alanine 457, serine 476–isoleucine 496, and tryptophan 517–phenylalanine 537.

Belongs to the major facilitator superfamily. Proton-dependent oligopeptide transporter (POT/PTR) (TC 2.A.17) family. In terms of tissue distribution, expressed in roots.

The protein localises to the membrane. In terms of biological role, transporter involved in a passive nitrate efflux. The protein is Protein NRT1/ PTR FAMILY 2.1 (NPF2.1) of Arabidopsis thaliana (Mouse-ear cress).